Reading from the N-terminus, the 673-residue chain is Gametogenetin (673 aa).

A disordered region spans residues 1-599 (MGNVQSEPSA…TSTAGASNKG (599 aa)). Over residues 14–30 (SRKEQASDRASDSRRTP) the composition is skewed to basic and acidic residues. The segment covering 70-83 (ASSSPLPLTLELPS) has biased composition (low complexity). The segment at 125–506 (RGLLEASHRG…APTPPSTLSP (382 aa)) is interaction with GGNBP1. Over residues 161-178 (PAPPPTPLEPRKQLPPAP) the composition is skewed to pro residues. Residues 192 to 202 (LASSATSPTES) show a composition bias toward polar residues. Positions 257-268 (SASGPLAAKASP) are enriched in low complexity. Position 399 is a phosphoserine (serine 399). The segment covering 413–424 (PRRPTPALLAPP) has biased composition (low complexity). Residues 438–475 (RPVPPSPQQIPPLPPPPPTPPATPPPAPPPTPQPPALP) show a composition bias toward pro residues. Residues 504–531 (LSPTAAADQVPAATPATVTSQVPATATA) show a composition bias toward low complexity. The interactions with ZNF403/GGNBP2 and OAZ3 stretch occupies residues 511 to 673 (DQVPAATPAT…HYDLQATHST (163 aa)). Positions 542–551 (TRTRRNKGPR) are enriched in basic residues.

Isoform 1 and isoform 3 interact with FANCL. Isoform 1 interacts with GGNBP1, ZNF403/GGNBP2 and OAZ3. Isoform 2 interacts with GGNBP1. Testis-specific. Specifically expressed in the germ cells and not in the somatic, Sertoli, or Leydig cells. In adult testis, expression starts in stage VIII pachytene spermatocytes, increases in stage IX and X pachytene spermatocytes, and culminates in stage XI diplotene spermatocytes and the meiotic cells in stage XII. Expression decreases slightly in step 1-3 spermatids, further decreases in step 4-11 spermatids, and is no longer detectable in step 12 spermatids and beyond. Isoform 2 is mainly expressed in testis.

The protein resides in the cytoplasm. It is found in the perinuclear region. Its subcellular location is the cytoplasmic vesicle. It localises to the nucleus. The protein localises to the nucleolus. Functionally, may be involved in spermatogenesis. The sequence is that of Gametogenetin (Ggn) from Mus musculus (Mouse).